A 60-amino-acid chain; its full sequence is Large ribosomal subunit protein bL32 (60 aa).

The disordered stretch occupies residues 1–21 (MAVPARHTSKAKKNKRRTHYK). Residues 7–20 (HTSKAKKNKRRTHY) are compositionally biased toward basic residues.

Belongs to the bacterial ribosomal protein bL32 family.

The sequence is that of Large ribosomal subunit protein bL32 from Streptococcus equi subsp. zooepidemicus (strain H70).